Consider the following 503-residue polypeptide: Potassium voltage-gated channel subfamily V member 1 (503 aa).

The Cytoplasmic segment spans residues Met-1–Arg-213. Residues Ile-214–Ser-234 form a helical membrane-spanning segment. The Extracellular portion of the chain corresponds to Ala-235 to Glu-246. Residues Ile-247–Val-267 traverse the membrane as a helical segment. The Cytoplasmic portion of the chain corresponds to Arg-268–Asn-279. A helical membrane pass occupies residues Ile-280 to Gly-300. Residues Ser-301–Arg-312 are Extracellular-facing. Residues Ile-313–Gly-334 form a helical; Voltage-sensor membrane-spanning segment. Over Leu-335–Glu-348 the chain is Cytoplasmic. A helical transmembrane segment spans residues Val-349 to Phe-369. The Selectivity filter signature appears at Thr-395–Asp-400. A helical membrane pass occupies residues Ile-410–Ile-430. The Cytoplasmic segment spans residues Asn-431 to Phe-503.

Belongs to the potassium channel family. V (TC 1.A.1.2) subfamily. Kv8.1/KCNV1 sub-subfamily. Heteromultimer with KCNB1 and KCNB2. Interacts with KCNC4 and KCND1.

Its subcellular location is the cell membrane. Functionally, potassium channel subunit that does not form functional channels by itself. Modulates KCNB1 and KCNB2 channel activity by shifting the threshold for inactivation to more negative values and by slowing the rate of inactivation. Can down-regulate the channel activity of KCNB1, KCNB2, KCNC4 and KCND1, possibly by trapping them in intracellular membranes. The chain is Potassium voltage-gated channel subfamily V member 1 (KCNV1) from Bos taurus (Bovine).